Reading from the N-terminus, the 424-residue chain is Serine hydroxymethyltransferase (424 aa).

(6S)-5,6,7,8-tetrahydrofolate-binding positions include Leu123 and 127-129 (GHL). Lys232 carries the N6-(pyridoxal phosphate)lysine modification. Glu245 is a (6S)-5,6,7,8-tetrahydrofolate binding site.

The protein belongs to the SHMT family. As to quaternary structure, homodimer. Pyridoxal 5'-phosphate is required as a cofactor.

It is found in the cytoplasm. It carries out the reaction (6R)-5,10-methylene-5,6,7,8-tetrahydrofolate + glycine + H2O = (6S)-5,6,7,8-tetrahydrofolate + L-serine. It participates in one-carbon metabolism; tetrahydrofolate interconversion. The protein operates within amino-acid biosynthesis; glycine biosynthesis; glycine from L-serine: step 1/1. Functionally, catalyzes the reversible interconversion of serine and glycine with tetrahydrofolate (THF) serving as the one-carbon carrier. This reaction serves as the major source of one-carbon groups required for the biosynthesis of purines, thymidylate, methionine, and other important biomolecules. Also exhibits THF-independent aldolase activity toward beta-hydroxyamino acids, producing glycine and aldehydes, via a retro-aldol mechanism. This is Serine hydroxymethyltransferase from Kocuria rhizophila (strain ATCC 9341 / DSM 348 / NBRC 103217 / DC2201).